The following is an 817-amino-acid chain: Neurabin-2 (817 aa).

2 disordered regions span residues 1–52 (MMKT…KYGS) and 64–163 (MGTT…GGDK). Actin-binding stretches follow at residues 1–154 (MMKT…FERS) and 164–282 (EAVA…QHRV). At Ser15 the chain carries Phosphoserine; by MAPK1. Ser17 is subject to Phosphoserine; by CDK5. At Ser94 the chain carries Phosphoserine; by PKA. Phosphoserine occurs at positions 100 and 116. An interaction with D(2) dopamine receptor region spans residues 100–371 (SLNENVDHSA…LERGVDNGRA (272 aa)). The span at 131-141 (SAQPAPPPHPP) shows a compositional bias: pro residues. The interaction with ADRA2A, ADRA2B and ADRA2C stretch occupies residues 169–255 (RLLRQERAGL…KRSRVFQPPP (87 aa)). Position 192 is a phosphoserine (Ser192). Thr193 carries the post-translational modification Phosphothreonine. Position 205 is a phosphoserine; by MAPK1 (Ser205). Phosphothreonine is present on Thr207. A disordered region spans residues 216 to 451 (EKADSRTGLH…DPAPSRKIHF (236 aa)). Basic and acidic residues predominate over residues 290–301 (KPREVRKIKPVE). Low complexity-rich tracts occupy residues 332–341 (STPATTASPA) and 399–409 (SGLGEDSGGSA). The segment covering 410 to 425 (LEEDDEEDEEDGEPPY) has biased composition (acidic residues). Positions 417-494 (DEEDGEPPYE…LEKRVERLEL (78 aa)) are interaction with protein phosphatase 1. At Ser438 the chain carries Phosphoserine. The PP1-binding motif signature appears at 447 to 451 (RKIHF). Residues 480-525 (SAEYELEKRVERLELFPVELEKDSEGLGISIIGMGAGADMGLEKLG) are interaction with RGS2. Residues 496–584 (PVELEKDSEG…RVRFMIGRER (89 aa)) enclose the PDZ domain. A coiled-coil region spans residues 595 to 616 (IQQTLEQERWQREMMEQRYAQY). The interaction with TGN38 stretch occupies residues 595 to 816 (IQQTLEQERW…NLQTLRNSNS (222 aa)). A Phosphoserine modification is found at Ser658. Positions 665–816 (EKLVHKFKEL…NLQTLRNSNS (152 aa)) form a coiled coil.

In terms of assembly, possibly exists as a homodimer, homotrimer or a homotetramer. Interacts with F-actin, PPP1CA, neurabin-1, TGN38 and D(2) dopamine receptor. Interacts with RGS1, RGS2, RGS4, RGS19 and ADRA1B, ADRA2A, ADRA2B, ADRA2C, CDKN2A, PPP1R2, RASGFR1 and TIAM1. Interacts (via C-terminus) with SPATA13 (via C-terminal tail). Interacts with DCLK2. Interacts with ADRA2B. Post-translationally, stimulation of D1 (but not D2) dopamine receptors induces Ser-94 phosphorylation. Dephosphorylation of Ser-94 is mediated mainly by PP1 and to a lesser extent by PP2A. Phosphorylation of spinophilin disrupts its association with F-actin, but does not affect its binding to PP1.

The protein localises to the cytoplasm. It localises to the cytoskeleton. Its subcellular location is the nucleus. The protein resides in the postsynaptic density. It is found in the cell junction. The protein localises to the adherens junction. It localises to the cell projection. Its subcellular location is the dendritic spine. The protein resides in the cell membrane. It is found in the lamellipodium. The protein localises to the filopodium. It localises to the ruffle membrane. Functionally, seems to act as a scaffold protein in multiple signaling pathways. Modulates excitatory synaptic transmission and dendritic spine morphology. Binds to actin filaments (F-actin) and shows cross-linking activity. Binds along the sides of the F-actin. May play an important role in linking the actin cytoskeleton to the plasma membrane at the synaptic junction. Believed to target protein phosphatase 1/PP1 to dendritic spines, which are rich in F-actin, and regulates its specificity toward ion channels and other substrates, such as AMPA-type and NMDA-type glutamate receptors. Plays a role in regulation of G-protein coupled receptor signaling, including dopamine D2 receptors and alpha-adrenergic receptors. May establish a signaling complex for dopaminergic neurotransmission through D2 receptors by linking receptors downstream signaling molecules and the actin cytoskeleton. Binds to ADRA1B and RGS2 and mediates regulation of ADRA1B signaling. May confer to Rac signaling specificity by binding to both, RacGEFs and Rac effector proteins. Probably regulates p70 S6 kinase activity by forming a complex with TIAM1. Required for hepatocyte growth factor (HGF)-induced cell migration. This Mus musculus (Mouse) protein is Neurabin-2 (Ppp1r9b).